The chain runs to 110 residues: MKEVKAIHKYAKTSAFKVRLVANQIRLKSVDEALNILSFSNKKAAVLIKKVLNSAISNAEHNDGLDIDELFVASICIDEGSTMKRIRPRAKGKANRILKRTSHITVGVSK.

The protein belongs to the universal ribosomal protein uL22 family. In terms of assembly, part of the 50S ribosomal subunit.

This protein binds specifically to 23S rRNA; its binding is stimulated by other ribosomal proteins, e.g. L4, L17, and L20. It is important during the early stages of 50S assembly. It makes multiple contacts with different domains of the 23S rRNA in the assembled 50S subunit and ribosome. In terms of biological role, the globular domain of the protein is located near the polypeptide exit tunnel on the outside of the subunit, while an extended beta-hairpin is found that lines the wall of the exit tunnel in the center of the 70S ribosome. This Ruthia magnifica subsp. Calyptogena magnifica protein is Large ribosomal subunit protein uL22.